Here is a 126-residue protein sequence, read N- to C-terminus: Large ribosomal subunit protein bL17 (126 aa).

This sequence belongs to the bacterial ribosomal protein bL17 family. As to quaternary structure, part of the 50S ribosomal subunit. Contacts protein L32.

This Aliivibrio salmonicida (strain LFI1238) (Vibrio salmonicida (strain LFI1238)) protein is Large ribosomal subunit protein bL17.